The sequence spans 32 residues: Photosystem II reaction center protein T (32 aa).

The chain crosses the membrane as a helical span at residues 3–23 (AITYTFILFLTLGLLFFAVAF).

Belongs to the PsbT family. PSII is composed of 1 copy each of membrane proteins PsbA, PsbB, PsbC, PsbD, PsbE, PsbF, PsbH, PsbI, PsbJ, PsbK, PsbL, PsbM, PsbT, PsbX, PsbY, PsbZ, Psb30/Ycf12, peripheral proteins PsbO, CyanoQ (PsbQ), PsbU, PsbV and a large number of cofactors. It forms dimeric complexes.

It localises to the cellular thylakoid membrane. Found at the monomer-monomer interface of the photosystem II (PS II) dimer, plays a role in assembly and dimerization of PSII. PSII is a light-driven water plastoquinone oxidoreductase, using light energy to abstract electrons from H(2)O, generating a proton gradient subsequently used for ATP formation. The chain is Photosystem II reaction center protein T from Synechococcus sp. (strain JA-2-3B'a(2-13)) (Cyanobacteria bacterium Yellowstone B-Prime).